We begin with the raw amino-acid sequence, 95 residues long: Large ribosomal subunit protein uL23 (95 aa).

The protein belongs to the universal ribosomal protein uL23 family. Part of the 50S ribosomal subunit. Contacts protein L29, and trigger factor when it is bound to the ribosome.

In terms of biological role, one of the early assembly proteins it binds 23S rRNA. One of the proteins that surrounds the polypeptide exit tunnel on the outside of the ribosome. Forms the main docking site for trigger factor binding to the ribosome. The polypeptide is Large ribosomal subunit protein uL23 (Bacillus subtilis (strain 168)).